A 481-amino-acid polypeptide reads, in one-letter code: Glutamyl-tRNA(Gln) amidotransferase subunit A (481 aa).

Catalysis depends on charge relay system residues Lys-76 and Ser-151. The active-site Acyl-ester intermediate is the Ser-175.

It belongs to the amidase family. GatA subfamily. As to quaternary structure, heterotrimer of A, B and C subunits.

The catalysed reaction is L-glutamyl-tRNA(Gln) + L-glutamine + ATP + H2O = L-glutaminyl-tRNA(Gln) + L-glutamate + ADP + phosphate + H(+). Functionally, allows the formation of correctly charged Gln-tRNA(Gln) through the transamidation of misacylated Glu-tRNA(Gln) in organisms which lack glutaminyl-tRNA synthetase. The reaction takes place in the presence of glutamine and ATP through an activated gamma-phospho-Glu-tRNA(Gln). The chain is Glutamyl-tRNA(Gln) amidotransferase subunit A from Neisseria meningitidis serogroup C (strain 053442).